We begin with the raw amino-acid sequence, 589 residues long: Sentrin-specific protease 2 (589 aa).

The short motif at Lys-28–Arg-31 is the Nuclear localization signal element. Ser-32 is modified (phosphoserine). Residues Pro-46–Arg-51 carry the Nuclear localization signal motif. The interval Ser-155–Leu-176 is disordered. The Nuclear export signal motif lies at Leu-317 to Gly-332. 2 positions are modified to phosphoserine: Ser-333 and Ser-344. The segment at Arg-396–Ser-560 is protease. Catalysis depends on residues His-478 and Asp-495. Cys-548 acts as the Nucleophile in catalysis.

Belongs to the peptidase C48 family. Binds to SUMO2 and SUMO3. Interacts with the C-terminal domain of NUP153 via its N-terminus. Interacts with MTA1. Post-translationally, polyubiquitinated; which leads to proteasomal degradation.

It localises to the nucleus. Its subcellular location is the nuclear pore complex. It is found in the nucleus membrane. The protein localises to the cytoplasm. Protease that catalyzes two essential functions in the SUMO pathway. The first is the hydrolysis of an alpha-linked peptide bond at the C-terminal end of the small ubiquitin-like modifier (SUMO) propeptides, SUMO1, SUMO2 and SUMO3 leading to the mature form of the proteins. The second is the deconjugation of SUMO1, SUMO2 and SUMO3 from targeted proteins, by cleaving an epsilon-linked peptide bond between the C-terminal glycine of the mature SUMO and the lysine epsilon-amino group of the target protein. May down-regulate CTNNB1 levels and thereby modulate the Wnt pathway. Deconjugates SUMO2 from MTA1. Plays a dynamic role in adipogenesis by desumoylating and promoting the stabilization of CEBPB. Acts as a regulator of the cGAS-STING pathway by catalyzing desumoylation of CGAS and STING1 during the late phase of viral infection. The chain is Sentrin-specific protease 2 from Homo sapiens (Human).